Consider the following 184-residue polypeptide: MSQAIGILELTSIAKGMEAGDAMLKSANVNLLVSKTICPGKFLLMLGGDVGAVQQAIATGTSLAGDMLVDSLVLPNIHASVLPAISGLNSVDKRQAVGIVETWSVAACICAADRAVKASNVTLVRVHMAFGIGGKCYMVVAGDVSDVNNAVTVASESAGEKGLLVYRSVIPRPHESMWRQMVEG.

BMC domains are found at residues 4-86 (AIGI…PAIS) and 96-182 (AVGI…RQMV). Cys-38 serves as a coordination point for [4Fe-4S] cluster.

The protein belongs to the bacterial microcompartments protein family. In terms of assembly, homotrimerizes to form a pseudohexamer with a large central pore, which is probably the binding site for the [4Fe-4S] center. Interacts with PduS. Originally suggested to be a homotetramer; this is incorrect. [4Fe-4S] cluster is required as a cofactor.

It is found in the bacterial microcompartment. The protein operates within polyol metabolism; 1,2-propanediol degradation. Its function is as follows. A minor shell protein of the bacterial microcompartment (BMC) dedicated to 1,2-propanediol (1,2-PD) degradation. Overexpression of this protein leads to cells with either deposits or having lamina-like structures in the cytoplasm. Not absolutely required to make artificial BMCs. May selectively transport specific metabolites. Functionally, expression of a cosmid containing the full 21-gene pdu operon in E.coli allows E.coli to grow on 1,2-propanediol (1,2-PD) with the appearance of bacterial microcompartments (BMC) in its cytoplasm. In terms of biological role, the 1,2-PD-specific bacterial microcompartment (BMC) concentrates low levels of 1,2-PD catabolic enzymes, concentrates volatile reaction intermediates thus enhancing pathway flux and keeps the level of toxic, mutagenic propionaldehyde low. This Citrobacter freundii protein is Bacterial microcompartment shell protein PduT.